The chain runs to 135 residues: Putative hydrolase EbsB (135 aa).

An RNase H type-1 domain is found at 1–128; it reads MLRIYVDAAT…ADMLARQALQ (128 aa). The Mg(2+) site is built by D7, E45, D71, and D120.

The protein belongs to the RNase H family. EbsB subfamily. Requires Mg(2+) as cofactor.

The protein localises to the secreted. The protein resides in the cell wall. Functionally, seems to play some role in the cell surface expression of a chromosomally encoded receptor, named enterococcal binding substance (EBS), that mediates mating aggregate formation. Might interfere with the synthesis or assembly of EBS and function as a cell wall hydrolase. This chain is Putative hydrolase EbsB, found in Enterococcus faecalis (strain ATCC 700802 / V583).